Reading from the N-terminus, the 420-residue chain is MVDEQVAVEHGTVSHTISREEDGVVHERRVLASGERVEVFYKAPAPRPREGRASTFHDFTVPAAAAVPGPEPEPEPHPPMPIHANGGGETKTNTQDQNQNQTTRTRTNAKAEERTAEMDDTMASSGGQRGAPISADLLSLSSLTGRMAAMAPSWMKSEVCGERMRFKEDVYDGEAETLAEPPRCFMLSFVFIYYCCYLAFLALLAFGFNPLFLPSFMPVGAKVLRGKGRDFGVPLSYGCPTNPFCKVYTLIPAVVINNVTYYPNNTDSHGGHGGFEAAALHVAALFESGCPNLQAVTNRNRTFNVTRASGRVERRLVQDMQRVLASAVVVMHHHCHYETYYVFDGVGPEFGTIPTPCFKDVLAFRPSLVTNCTAPLKTSVKGPNWSGAAGGMKRKQCRVDRLTDRSFPAYLEEVMYVMVQ.

Disordered regions lie at residues 1–21 (MVDE…SREE) and 64–129 (AAAV…GGQR). The Intravirion segment spans residues 1–184 (MVDEQVAVEH…AETLAEPPRC (184 aa)). Over residues 90 to 108 (TKTNTQDQNQNQTTRTRTN) the composition is skewed to low complexity. Residues 185 to 205 (FMLSFVFIYYCCYLAFLALLA) form a helical; Signal-anchor for type II membrane protein membrane-spanning segment. Residues 206-420 (FGFNPLFLPS…LEEVMYVMVQ (215 aa)) are Virion surface-facing. Residues N258, N264, N300, N304, N371, and N384 are each glycosylated (N-linked (GlcNAc...) asparagine; by host).

The protein belongs to the herpesviridae BDLF2 family. As to quaternary structure, interacts with BMRF2.

It is found in the virion membrane. Functionally, rearranges cellular actin to increase intercellular contacts and thereby promote virus cell-to-cell spreading. Induce the outgrowth of long, branched plasma membrane fronds to create intercellular network for virion traffic. The fronds are actin based and RhoA-dependent. This Homo sapiens (Human) protein is Protein BDLF2.